A 526-amino-acid polypeptide reads, in one-letter code: Transcription factor kayak (526 aa).

Disordered regions lie at residues 71–165 (PPLA…GTGG) and 178–221 (RNTN…NKQA). Composition is skewed to low complexity over residues 78 to 87 (NNNNNNNNNG) and 133 to 153 (ISDT…HMMG). Positions 154–165 (NSGGGNGGGTGG) are enriched in gly residues. Residues 178-187 (RNTNTSNSAT) show a composition bias toward polar residues. One can recognise a bZIP domain in the interval 208–271 (EEKRRIRRER…NQLEYFLQAH (64 aa)). Residues 210-229 (KRRIRRERNKQAAARCRKRR) are basic motif. The interval 236–264 (LTEEVELLEKRGENLKKEMELLNETKNQL) is leucine-zipper. The span at 301 to 322 (GSCGSGSSHHNNNSNSNDSSSG) shows a compositional bias: low complexity. Disordered regions lie at residues 301 to 345 (GSCG…DLKP) and 504 to 526 (TSQN…LVSL). The span at 330 to 340 (TLNSTGRSNSP) shows a compositional bias: polar residues. Serine 339 carries the phosphoserine modification.

Belongs to the bZIP family. Fos subfamily. Homodimer. Heterodimer with Jra. The kay-Jra heterodimer binds more stably to the AP-1 site than either of the two proteins alone.

The protein localises to the nucleus. Developmentally regulated transcription factor AP-1 binds and recognizes the enhancer DNA sequence: 5'-TGA[CG]TCA-3'. May play a role in the function or determination of a particular subset of cells in the developing embryo. It is able to carry out its function either independently of or in conjunction with Jra. The polypeptide is Transcription factor kayak (Drosophila persimilis (Fruit fly)).